Here is a 326-residue protein sequence, read N- to C-terminus: Eukaryotic translation initiation factor 3 subunit I (326 aa).

WD repeat units follow at residues 8–47, 50–89, 145–184, 188–227, and 285–326; these read GHER…RLGT, GHQG…IIAS, MTES…KVVD, DHAA…CLKT, and GHFG…NIFE.

Belongs to the eIF-3 subunit I family. Component of the eukaryotic translation initiation factor 3 (eIF-3) complex. The eIF-3 complex interacts with pix.

It localises to the cytoplasm. Component of the eukaryotic translation initiation factor 3 (eIF-3) complex, which is involved in protein synthesis of a specialized repertoire of mRNAs and, together with other initiation factors, stimulates binding of mRNA and methionyl-tRNAi to the 40S ribosome. The eIF-3 complex specifically targets and initiates translation of a subset of mRNAs involved in cell proliferation. The protein is Eukaryotic translation initiation factor 3 subunit I of Drosophila pseudoobscura pseudoobscura (Fruit fly).